The primary structure comprises 322 residues: Elongation factor P--(R)-beta-lysine ligase (322 aa).

A substrate-binding site is contributed by 75 to 77; sequence SPE. ATP is bound at residue 99–101; sequence RNE. Tyr-117 lines the substrate pocket. 241–242 provides a ligand contact to ATP; the sequence is EL. Residue Glu-248 coordinates substrate. Gly-297 is an ATP binding site.

The protein belongs to the class-II aminoacyl-tRNA synthetase family. EpmA subfamily. In terms of assembly, homodimer.

It catalyses the reaction D-beta-lysine + L-lysyl-[protein] + ATP = N(6)-((3R)-3,6-diaminohexanoyl)-L-lysyl-[protein] + AMP + diphosphate + H(+). Functionally, with EpmB is involved in the beta-lysylation step of the post-translational modification of translation elongation factor P (EF-P). Catalyzes the ATP-dependent activation of (R)-beta-lysine produced by EpmB, forming a lysyl-adenylate, from which the beta-lysyl moiety is then transferred to the epsilon-amino group of a conserved specific lysine residue in EF-P. This chain is Elongation factor P--(R)-beta-lysine ligase, found in Avibacterium paragallinarum (Haemophilus gallinarum).